Here is a 512-residue protein sequence, read N- to C-terminus: Aldehyde dehydrogenase B (512 aa).

Active-site residues include E268 and C307.

As to quaternary structure, homotetramer.

The enzyme catalyses an aldehyde + NADP(+) + H2O = a carboxylate + NADPH + 2 H(+). The catalysed reaction is acetaldehyde + NADP(+) + H2O = acetate + NADPH + 2 H(+). It carries out the reaction chloroacetaldehyde + NADP(+) + H2O = chloroacetate + NADPH + 2 H(+). It catalyses the reaction propanal + NADP(+) + H2O = propanoate + NADPH + 2 H(+). Magnesium increases enzyme activity with various substrates. Catalyzes the NADP(+)-dependent oxidation of diverse aldehydes to their corresponding carboxylic acids, with a preference for acetaldehyde and chloroacetaldehyde. May play a role in detoxifying aldehydes present during stationary phase. Cannot use NAD(+) instead of NADP(+) as the electron acceptor. To a lesser extent is also able to oxidize propionaldehyde (propanal), benzaldehyde, mafosfamide, and 4-hydroperoxycyclophosphamide. Does not use either glyceraldehyde or glycolaldehyde as substrates. The sequence is that of Aldehyde dehydrogenase B from Escherichia coli (strain K12).